The sequence spans 86 residues: Large ribosomal subunit protein bL27 (86 aa).

The protein belongs to the bacterial ribosomal protein bL27 family.

This Xanthomonas campestris pv. campestris (strain 8004) protein is Large ribosomal subunit protein bL27.